A 183-amino-acid polypeptide reads, in one-letter code: Holliday junction branch migration complex subunit RuvA (183 aa).

The tract at residues 1 to 64 (MVVGIEGIIT…EDSNKFYGFL (64 aa)) is domain I. A domain II region spans residues 65–139 (DKDEQKMFEM…DTRTKLENVS (75 aa)). Residue serine 139 is a region of interest, flexible linker. Residues 139 to 183 (SDDKSEALAALLTLGFKQEKIISVLASAQATGTSELIKEALKKLR) form a domain III region.

It belongs to the RuvA family. Homotetramer. Forms an RuvA(8)-RuvB(12)-Holliday junction (HJ) complex. HJ DNA is sandwiched between 2 RuvA tetramers; dsDNA enters through RuvA and exits via RuvB. An RuvB hexamer assembles on each DNA strand where it exits the tetramer. Each RuvB hexamer is contacted by two RuvA subunits (via domain III) on 2 adjacent RuvB subunits; this complex drives branch migration. In the full resolvosome a probable DNA-RuvA(4)-RuvB(12)-RuvC(2) complex forms which resolves the HJ.

It localises to the cytoplasm. The RuvA-RuvB-RuvC complex processes Holliday junction (HJ) DNA during genetic recombination and DNA repair, while the RuvA-RuvB complex plays an important role in the rescue of blocked DNA replication forks via replication fork reversal (RFR). RuvA specifically binds to HJ cruciform DNA, conferring on it an open structure. The RuvB hexamer acts as an ATP-dependent pump, pulling dsDNA into and through the RuvAB complex. HJ branch migration allows RuvC to scan DNA until it finds its consensus sequence, where it cleaves and resolves the cruciform DNA. The chain is Holliday junction branch migration complex subunit RuvA from Campylobacter jejuni subsp. doylei (strain ATCC BAA-1458 / RM4099 / 269.97).